Reading from the N-terminus, the 242-residue chain is MISDINALKYKKVLLKVSGEALMGDKQFGHEYDVIKKIAGDIKEVINLGVEVAIVVGGGNIYRGINASLVGMDRASADYIGMLATMINALTLQNVMESLNIYTRVLSAIPMMSVCEPYIRRKAKRHMEKKRVVIFAGGTGNPFCTTDSAAVLRAIEMNCDILLKATQVDGVYDSDPKKNPDAKKYFTISYKDVITNSLQVMDTAAIAVARENKLPIRVFSIKEQGNFARVIQDKGEYTTIEE.

ATP is bound at residue 16–19 (KVSG). G58 serves as a coordination point for UMP. ATP contacts are provided by G59 and R63. UMP-binding positions include D78 and 139-146 (TGNPFCTT). ATP is bound by residues T166, Q167, Y172, and D175.

The protein belongs to the UMP kinase family. Homohexamer.

The protein localises to the cytoplasm. It carries out the reaction UMP + ATP = UDP + ADP. The protein operates within pyrimidine metabolism; CTP biosynthesis via de novo pathway; UDP from UMP (UMPK route): step 1/1. Inhibited by UTP. In terms of biological role, catalyzes the reversible phosphorylation of UMP to UDP. The polypeptide is Uridylate kinase (Rickettsia massiliae (strain Mtu5)).